The chain runs to 563 residues: Probable ATP-dependent RNA helicase ddx51 (563 aa).

Positions 15–43 (NTLESFGIEEWLINNLKEQSIINLFPVQQ) match the Q motif motif. The Helicase ATP-binding domain maps to 48 to 276 (FINRTEGHDI…LLQLNAPLFF (229 aa)). Position 61–68 (61–68 (APTGSGKT)) interacts with ATP. Residues 179 to 182 (DEAD) carry the DEAD box motif. The Helicase C-terminal domain maps to 308–482 (LLNIIYESLL…SYKLGLNQMR (175 aa)). Residues 493 to 537 (IGDNGDDNNDNNNEDGNEIDGSVENIENNNNNNNNNNKNNNNNNF) are disordered. Residues 495-510 (DNGDDNNDNNNEDGNE) are compositionally biased toward acidic residues. Low complexity predominate over residues 520–536 (NNNNNNNNNNKNNNNNN).

It belongs to the DEAD box helicase family. DDX51/DBP6 subfamily.

It localises to the nucleus. The protein resides in the nucleolus. It carries out the reaction ATP + H2O = ADP + phosphate + H(+). In terms of biological role, probable ATP-binding RNA helicase which may be involved in ribosome biogenesis. This chain is Probable ATP-dependent RNA helicase ddx51 (ddx51), found in Dictyostelium discoideum (Social amoeba).